Here is a 544-residue protein sequence, read N- to C-terminus: CTP synthase (544 aa).

The amidoligase domain stretch occupies residues 1 to 265 (MTKFIFVTGG…DNIITEQLQL (265 aa)). Ser13 is a CTP binding site. Ser13 is a binding site for UTP. Residues 14 to 19 (SLGKGI) and Asp71 each bind ATP. 2 residues coordinate Mg(2+): Asp71 and Glu139. Residues 146 to 148 (DIE), 186 to 191 (KTKPTQ), and Lys222 contribute to the CTP site. UTP is bound by residues 186–191 (KTKPTQ) and Lys222. A Glutamine amidotransferase type-1 domain is found at 290–544 (KIAMVGKYVD…VKAALNNKKA (255 aa)). Position 353 (Gly353) interacts with L-glutamine. Cys380 acts as the Nucleophile; for glutamine hydrolysis in catalysis. Residues 381–384 (LGMQ), Glu404, and Arg471 each bind L-glutamine. Residues His517 and Glu519 contribute to the active site.

The protein belongs to the CTP synthase family. As to quaternary structure, homotetramer.

The catalysed reaction is UTP + L-glutamine + ATP + H2O = CTP + L-glutamate + ADP + phosphate + 2 H(+). The enzyme catalyses L-glutamine + H2O = L-glutamate + NH4(+). It carries out the reaction UTP + NH4(+) + ATP = CTP + ADP + phosphate + 2 H(+). The protein operates within pyrimidine metabolism; CTP biosynthesis via de novo pathway; CTP from UDP: step 2/2. Its activity is regulated as follows. Allosterically activated by GTP, when glutamine is the substrate; GTP has no effect on the reaction when ammonia is the substrate. The allosteric effector GTP functions by stabilizing the protein conformation that binds the tetrahedral intermediate(s) formed during glutamine hydrolysis. Inhibited by the product CTP, via allosteric rather than competitive inhibition. Catalyzes the ATP-dependent amination of UTP to CTP with either L-glutamine or ammonia as the source of nitrogen. Regulates intracellular CTP levels through interactions with the four ribonucleotide triphosphates. The sequence is that of CTP synthase from Neisseria gonorrhoeae (strain ATCC 700825 / FA 1090).